The sequence spans 285 residues: MSGMSICFAMREAVEWILHLDPVFMHVGPLEIRWYALSYVFGILFAHWHITKASQCLALDKKFLDSLMLWAVIGIILGGRTAYILLYNPSFYWEYPSEILQTWHGGMSMHGGYVGCIIAVSIVCKKHRVRVMPVLDLCACAAPLGLFLGRMANLVNGELYGRATTTCLGVVFPSSGDLVPRHPSQVYEAMLEGLLPLLFMSILARYTKVRLRFGVLSHMFGAWYGIVRCAVEFFREPDPQVGYIAFGWLTMGQVLSAPIAVVGIFMLVLTVLREKPREGVADISA.

The next 4 membrane-spanning stretches (helical) occupy residues 30-50, 67-87, 103-123, and 129-149; these read LEIR…HWHI, LMLW…ILLY, WHGG…VSIV, and VRVM…LFLG. An a 1,2-diacyl-sn-glycero-3-phospho-(1'-sn-glycerol)-binding site is contributed by R150. Helical transmembrane passes span 184-204, 213-233, and 252-272; these read SQVY…SILA, FGVL…AVEF, and GQVL…LTVL.

Belongs to the Lgt family.

Its subcellular location is the cell inner membrane. It carries out the reaction L-cysteinyl-[prolipoprotein] + a 1,2-diacyl-sn-glycero-3-phospho-(1'-sn-glycerol) = an S-1,2-diacyl-sn-glyceryl-L-cysteinyl-[prolipoprotein] + sn-glycerol 1-phosphate + H(+). The protein operates within protein modification; lipoprotein biosynthesis (diacylglyceryl transfer). Functionally, catalyzes the transfer of the diacylglyceryl group from phosphatidylglycerol to the sulfhydryl group of the N-terminal cysteine of a prolipoprotein, the first step in the formation of mature lipoproteins. The polypeptide is Phosphatidylglycerol--prolipoprotein diacylglyceryl transferase (Anaplasma marginale (strain Florida)).